The primary structure comprises 550 residues: Acetyl-coenzyme A transporter 1 (550 aa).

Topologically, residues 1 to 74 are cytoplasmic; the sequence is MSPTISHKDN…KRSYRAELSS (74 aa). Serine 42 bears the Phosphoserine mark. A helical transmembrane segment spans residues 75–95; the sequence is ILLLLFLYVLQGIPLGLAGSI. The Extracellular segment spans residues 96–113; the sequence is PLILQSKNVSYTDQAFFS. The N-linked (GlcNAc...) asparagine glycan is linked to asparagine 103. Residues 114–134 form a helical membrane-spanning segment; sequence FVFWPFSLKLLWAPLVDAVYF. At 135 to 141 the chain is on the cytoplasmic side; it reads KNFGRRK. A helical transmembrane segment spans residues 142–162; that stretch reads SWLVPTQYILGIFMIYLSTQV. The Extracellular segment spans residues 163–256; it reads DRLLGNIDGR…FQPQPRGIVT (94 aa). The chain crosses the membrane as a helical span at residues 257–277; the sequence is LSDFLFFWGTVFLITTTLVAL. The Cytoplasmic portion of the chain corresponds to 278–300; that stretch reads LKKETREASVVKEETQGITDTYK. A helical transmembrane segment spans residues 301-321; sequence LLFSIIKMPAVLAFCLLILTS. Residues 322-344 lie on the Extracellular side of the membrane; that stretch reads KIGFSAADAVTGLKLVEEGVPKE. A helical transmembrane segment spans residues 345–365; that stretch reads HLALLAVPMVPLQIILPLLIS. Over 366–375 the chain is Cytoplasmic; the sequence is KYTAGPQPLN. Residues 376 to 396 traverse the membrane as a helical segment; that stretch reads IFYKAMPYRLLLGLEYALLVW. Residues 397-405 lie on the Extracellular side of the membrane; that stretch reads WTPKVEHQG. A helical transmembrane segment spans residues 406-426; that stretch reads GFPIYYYIIVLLSYALHQVTL. At 427–509 the chain is on the cytoplasmic side; sequence YSMYVSIMAF…LGGSCVTALD (83 aa). Residues 510–530 traverse the membrane as a helical segment; that stretch reads GYYVESIVCVLIGFGWWFFLG. The Extracellular portion of the chain corresponds to 531–550; it reads PKFKKLQDEGPSSWKCKRTN.

Belongs to the SLC33A transporter family. As to quaternary structure, homodimerizes. As to expression, expressed in brain at all developmental stages. Detected in hippocampus, hypothalamus, cerebellum, cortex, olfactory bulb, and the ventral and dorsal anterior olfactory nucleus.

It localises to the endoplasmic reticulum membrane. It catalyses the reaction acetyl-CoA(in) = acetyl-CoA(out). Acetyl-CoA transporter that mediates active acetyl-CoA import through the endoplasmic reticulum (ER) membrane into the ER lumen where specific ER-based acetyl-CoA:lysine acetyltransferases are responsible for the acetylation of ER-based protein substrates, such as BACE1. Necessary for O-acetylation of gangliosides. In Rattus norvegicus (Rat), this protein is Acetyl-coenzyme A transporter 1 (Slc33a1).